A 505-amino-acid chain; its full sequence is ATP synthase subunit alpha (505 aa).

Gly-169–Thr-176 is a binding site for ATP.

The protein belongs to the ATPase alpha/beta chains family. F-type ATPases have 2 components, CF(1) - the catalytic core - and CF(0) - the membrane proton channel. CF(1) has five subunits: alpha(3), beta(3), gamma(1), delta(1), epsilon(1). CF(0) has three main subunits: a(1), b(2) and c(9-12). The alpha and beta chains form an alternating ring which encloses part of the gamma chain. CF(1) is attached to CF(0) by a central stalk formed by the gamma and epsilon chains, while a peripheral stalk is formed by the delta and b chains.

It localises to the cell inner membrane. The catalysed reaction is ATP + H2O + 4 H(+)(in) = ADP + phosphate + 5 H(+)(out). Its function is as follows. Produces ATP from ADP in the presence of a proton gradient across the membrane. The alpha chain is a regulatory subunit. The protein is ATP synthase subunit alpha of Desulfosudis oleivorans (strain DSM 6200 / JCM 39069 / Hxd3) (Desulfococcus oleovorans).